The following is a 255-amino-acid chain: Ribosomal RNA small subunit methyltransferase A (255 aa).

N12, L14, G39, E60, D84, and N106 together coordinate S-adenosyl-L-methionine.

The protein belongs to the class I-like SAM-binding methyltransferase superfamily. rRNA adenine N(6)-methyltransferase family. RsmA subfamily.

The protein resides in the cytoplasm. It catalyses the reaction adenosine(1518)/adenosine(1519) in 16S rRNA + 4 S-adenosyl-L-methionine = N(6)-dimethyladenosine(1518)/N(6)-dimethyladenosine(1519) in 16S rRNA + 4 S-adenosyl-L-homocysteine + 4 H(+). Specifically dimethylates two adjacent adenosines (A1518 and A1519) in the loop of a conserved hairpin near the 3'-end of 16S rRNA in the 30S particle. May play a critical role in biogenesis of 30S subunits. The sequence is that of Ribosomal RNA small subunit methyltransferase A from Janthinobacterium sp. (strain Marseille) (Minibacterium massiliensis).